The sequence spans 323 residues: MIKKVNNFLVIILVFLAVILTELIMFMELNSLTLLKCFIFVDLLLVFIPFSLPRMGGKVSSIKNLIDAIKTRIFFFNSCLFFSKIWLYENKITIFWVYTIWNGLNSIFCGIFMEDNYMADIYSISPKNGGGDPAEGNTPSGNPDSTISYDFLAEARDRINTHKSEISTPTEGDKAILFSKDIPTYGQKKIYFQESSGLLSRRGLAPLSVREICDTLLTDKGLPPLNTVGLKSHLNTVDQNIVLYKEQVVKFNNTLRGIDQGNEPFFPDSSKKLFLEYKEILPHMVEINEKMGTNLCKEIKAKDPSFHHPLLTNNDSTSKPKEK.

The next 3 membrane-spanning stretches (helical) occupy residues 8–28 (FLVIILVFLAVILTELIMFME), 32–52 (LTLLKCFIFVDLLLVFIPFSL), and 92–112 (ITIFWVYTIWNGLNSIFCGIF).

It is found in the mitochondrion membrane. This is an uncharacterized protein from Neurospora crassa (strain ATCC 24698 / 74-OR23-1A / CBS 708.71 / DSM 1257 / FGSC 987).